A 1039-amino-acid chain; its full sequence is Alpha-mannosidase 2C1 (1039 aa).

4 residues coordinate Co(2+): His259, Asp261, Asp371, and His576. Asp371 acts as the Nucleophile in catalysis.

Belongs to the glycosyl hydrolase 38 family. Co(2+) serves as cofactor. As to expression, expressed in kidney and liver (at protein level). Widely expressed, with highest levels in lung, ovary and testis. Also detected at lower levels in heart, brain, liver, spleen, kidney and thymus.

The protein resides in the cytoplasm. It catalyses the reaction Hydrolysis of terminal, non-reducing alpha-D-mannose residues in alpha-D-mannosides.. Its activity is regulated as follows. Inhibited by 1,4-dideoxy-1,4-imino-d-mannitol (DIM) and EDTA. Cleaves alpha 1,2-, alpha 1,3-, and alpha 1,6-linked mannose residues from glycoproteins. Involved in the degradation of free oligosaccharides in the cytoplasm. The protein is Alpha-mannosidase 2C1 of Mus musculus (Mouse).